The sequence spans 216 residues: ATP-dependent Clp protease proteolytic subunit (216 aa).

Ser-109 serves as the catalytic Nucleophile. His-134 is an active-site residue.

The protein belongs to the peptidase S14 family. In terms of assembly, fourteen ClpP subunits assemble into 2 heptameric rings which stack back to back to give a disk-like structure with a central cavity, resembling the structure of eukaryotic proteasomes.

The protein localises to the cytoplasm. The catalysed reaction is Hydrolysis of proteins to small peptides in the presence of ATP and magnesium. alpha-casein is the usual test substrate. In the absence of ATP, only oligopeptides shorter than five residues are hydrolyzed (such as succinyl-Leu-Tyr-|-NHMec, and Leu-Tyr-Leu-|-Tyr-Trp, in which cleavage of the -Tyr-|-Leu- and -Tyr-|-Trp bonds also occurs).. Cleaves peptides in various proteins in a process that requires ATP hydrolysis. Has a chymotrypsin-like activity. Plays a major role in the degradation of misfolded proteins. This is ATP-dependent Clp protease proteolytic subunit from Rhodospirillum rubrum (strain ATCC 11170 / ATH 1.1.1 / DSM 467 / LMG 4362 / NCIMB 8255 / S1).